The primary structure comprises 224 residues: Probable amino-acid permease protein YxeN (224 aa).

The next 6 helical transmembrane spans lie at 3–23 (TIDW…LPIT), 24–44 (LFMA…LALI), 58–78 (LYIS…IYYG), 91–111 (ALTA…AEIF), 157–177 (FIGL…EMFA), and 190–210 (FETY…YSIL). The region spanning 20-211 (LPITLFMAIA…VLTIIYSILQ (192 aa)) is the ABC transmembrane type-1 domain.

The protein belongs to the binding-protein-dependent transport system permease family. The complex is composed of two ATP-binding proteins (YxeO), two transmembrane proteins (YxeN) and a solute-binding protein (YxeM).

The protein resides in the cell membrane. Its function is as follows. Probably part of the ABC transporter complex YxeMNO that could be involved in amino-acid import. May transport S-methylcysteine. Probably responsible for the translocation of the substrate across the membrane. This chain is Probable amino-acid permease protein YxeN (yxeN), found in Bacillus subtilis (strain 168).